Here is a 235-residue protein sequence, read N- to C-terminus: Serine protease SplA (235 aa).

The N-terminal stretch at Met1–Ala35 is a signal peptide. Catalysis depends on charge relay system residues His74, Asp113, and Ser189.

This sequence belongs to the peptidase S1B family.

It is found in the secreted. This chain is Serine protease SplA (splA), found in Staphylococcus aureus (strain MSSA476).